The primary structure comprises 778 residues: Endonuclease MutS2 (778 aa).

328-335 (GPNTGGKT) contacts ATP. The Smr domain occupies 702–777 (LDLRGKRYEE…GSGATIVTFK (76 aa)).

It belongs to the DNA mismatch repair MutS family. MutS2 subfamily. As to quaternary structure, homodimer. Binds to stalled ribosomes, contacting rRNA.

Functionally, endonuclease that is involved in the suppression of homologous recombination and thus may have a key role in the control of bacterial genetic diversity. Acts as a ribosome collision sensor, splitting the ribosome into its 2 subunits. Detects stalled/collided 70S ribosomes which it binds and splits by an ATP-hydrolysis driven conformational change. Acts upstream of the ribosome quality control system (RQC), a ribosome-associated complex that mediates the extraction of incompletely synthesized nascent chains from stalled ribosomes and their subsequent degradation. Probably generates substrates for RQC. The sequence is that of Endonuclease MutS2 from Streptococcus pneumoniae (strain 70585).